The following is a 332-amino-acid chain: L-lactate dehydrogenase A chain (332 aa).

NAD(+) is bound by residues 29–57 (GMVGMASAISVLLKDLCDELALVDVMEEK) and R99. R106, N138, and R169 together coordinate substrate. N138 is a binding site for NAD(+). H193 functions as the Proton acceptor in the catalytic mechanism. T248 lines the substrate pocket.

This sequence belongs to the LDH/MDH superfamily. LDH family. As to quaternary structure, homotetramer.

Its subcellular location is the cytoplasm. The catalysed reaction is (S)-lactate + NAD(+) = pyruvate + NADH + H(+). It functions in the pathway fermentation; pyruvate fermentation to lactate; (S)-lactate from pyruvate: step 1/1. Its function is as follows. Interconverts simultaneously and stereospecifically pyruvate and lactate with concomitant interconversion of NADH and NAD(+). The protein is L-lactate dehydrogenase A chain (ldha) of Lycodichthys dearborni (Antarctic eelpout).